The chain runs to 310 residues: MAGAAQTTAFGQAVIGPPGSGKTTYCLGMSEFLRALGRRVAVVNLDPANEGLPYECAVDVGELVGLSDVMDELQLGPNGGLLYCMEYLEANLDWLRAKLDPLRGHYFLFDCPGQVELCTHHGALRSIFSQMTQWDLRLTAVHLVDSHYCTDPAKFISVLCTSLATMLHVELPHVNLLSKMDLIEHYGKLAFNLDYYTEVLDLSYLLDHLASDPFFRHYRQLNEKLVQLIEDYSLVSFIPLNIQDKESIQRVLQAVDKANGYCFGVQEQRSLEAMMSAAVGADFHFSSTLGLQEKYLAPSDQPVEQEAMQL.

The residue at position 2 (Ala2) is an N-acetylalanine. 19 to 24 (GSGKTT) is a binding site for GTP. The Gly-Pro-Asn (GPN)-loop; involved in dimer interface signature appears at 76 to 78 (GPN). Residue 178-181 (SKMD) coordinates GTP.

This sequence belongs to the GPN-loop GTPase family. Heterodimers with GPN1 or GPN3. Binds to RNA polymerase II (RNAPII).

Functionally, small GTPase required for proper localization of RNA polymerase II and III (RNAPII and RNAPIII). May act at an RNAP assembly step prior to nuclear import. In Sus scrofa (Pig), this protein is GPN-loop GTPase 2.